A 273-amino-acid chain; its full sequence is GDNF family receptor alpha-4 (273 aa).

An N-linked (GlcNAc...) asparagine glycan is attached at Asn-192. Residue Asn-250 is the site of GPI-anchor amidated asparagine attachment. Positions 251–273 are cleaved as a propeptide — removed in mature form; the sequence is AGCCFLWVSSMSILTALALQALL.

This sequence belongs to the GDNFR family. In terms of assembly, interacts with ARTN ligand and RET: forms a 2:2:2 ternary complex composed of ARTN ligand, GFRA3 and RET receptor. Interacts with SORL1. As to expression, weakly expressed in heart, brain and testis.

The protein localises to the cell membrane. Its subcellular location is the secreted. Receptor for persephin (PSPN), a growth factor that exhibits neurotrophic activity on mesencephalic dopaminergic and motor neurons. Acts by binding to its coreceptor, GFRA4, leading to autophosphorylation and activation of the RET receptor. May be important in C-cell development and, in the postnatal development of the adrenal medulla. The chain is GDNF family receptor alpha-4 (Gfra4) from Rattus norvegicus (Rat).